Here is a 60-residue protein sequence, read N- to C-terminus: uncharacterized protein (60 aa).

This is an uncharacterized protein from Thermotoga maritima (strain ATCC 43589 / DSM 3109 / JCM 10099 / NBRC 100826 / MSB8).